Reading from the N-terminus, the 356-residue chain is Protein ATP1B4 (356 aa).

Residues 1–109 (MRRQLRSRRA…SLARTGQSRS (109 aa)) are Nuclear-facing. Positions 26-78 (EANHNYLADEEEEAEEEAQVMMVPGLEEEEEEEEGKEEEEEREEEEGQGQSTG) are disordered. 2 stretches are compositionally biased toward acidic residues: residues 33–43 (ADEEEEAEEEA) and 51–72 (LEEE…EEEG). The chain crosses the membrane as a helical; Signal-anchor for type II membrane protein span at residues 110–130 (LILVIYFFFYASLAAVITLFI). Residues 131-356 (YMLFLAISPY…RIIFTLNIET (226 aa)) lie on the Perinuclear space side of the membrane.

The protein belongs to the X(+)/potassium ATPases subunit beta family. In terms of assembly, associates with a SMAD7-transcriptional complex. Interacts with TOR1AIP1. Does not associate with known Na,K-ATPase alpha-subunits. Interacts with SNW1. As to expression, expressed in skeletal muscle (at protein level). Expressed during postnatal development in skeletal muscle and heart.

The protein resides in the nucleus inner membrane. In terms of biological role, may act as a transcriptional coregulator during muscle development through its interaction with SNW1. Has lost its ancestral function as a Na,K-ATPase beta-subunit. The chain is Protein ATP1B4 (Atp1b4) from Mus musculus (Mouse).